The sequence spans 1863 residues: MECQEFIVLYTHQKMKKSKVWQDGVLKITHLGNKAILYDDKGACLESLFLKCLEVKPGDDLESERYLITVEEAKAVGSRAVEPDGSREALESGSRTLVSSSRSLGCQPSGLKRKATGFQRPYKMPKKVTITENSEPAASLGDENPGPPGPRLLPTFSSTLPLFPTVGQKDLTPVSTDNQSPITFSNRERSDTPLSLPSSYFKINTNTLGKEDKLCFPVSSETKHSDSLLASEPMRRNGLDSHCPGVSQNVRSKAQILALLKSSSTNRKDLHGEIPGHFPKIEPQGCLNIISKPEEDYAETQSIGNLRCEQQSENPTRTTSRWARYLPSQRSPPCSAADENDTEDKPEAQEDVNIFNLSELLQKKSELFETCSKKGELHSEDKPVDNTCQYWNQEDNLAPSFCKNSSVLVSCSSKENASLLSESDIQYSSKVPVNQHEKVWTREGSQGADADAALEPEYRPVSPLPEIGHKQTEVEASLSTSSRISDDIADMGSKSNADREDLKTVHKAVQPFLEVSFNLSNFETSDTDEASQEDSRLSQDSERWEKEAVLTDDSCVQKSCEDIGCREIVGKLPLLSSTDDEPKEALPADGTLLSEFCDRTCVGFNSGPHGDVKTGKALEGQCHSDTGSSLDSSLEWSEDVAGDSREDASQSIQGNAINCGGVSPSKKPRGVNRSLYSPYLLTAVTDPAPENSDLLSEARKSPAIEVSRALLECPCEHRASQQPVEFQGHQVKGSATSGVMVRGHSLQRGCTQFPDSIDYENFLTDTCVWTPGLPSTYGQTDFLQVISPEQKIPALSPAPTFSFNTRNEDTVLELSEESLKTRTLPGLKTIGFQDSKNLQRFPFLSGASAPFATLPADDGPAVLDPCSFMIDDDAREPSGSSMLNLCEESGLSFDLGLEGQGGTPGGVSLLPKSSTQSKWLKYQNPPQCNSTAPNRLASEVTEGLFAEAVSGLHFSHTSESESSVDPVRLQMIKGLLHQQQQDLVSRKQAFSLTLNQTCKTQEHETVLGSSASKNCRAKDLQEINNSDLCFPNGQKIISAYLPQRQVHIPAVFQSPAHYRQVFTASIIEHLNILLFELAQRLYKALSKVDISFYTSSKGETMRSGKNNSPSCHHNQPAKLVMVKKEGPNKGRLFYTCDKSKDNQCKFFKWLEEVTPGQLPQNTSQSTMVFNDIKSIGSYLRSQKVPVYEECQLLLRRGFDFQRKQCGKLKKLTTVNPDFYSETKSKIYLKLSRRESSSVYSKGDLWVISKTLDFELDTFIACSAFFGPSSVNEVELLPLKGYFPSNWPTNITVHALLVCNASTELTTLQNIQDYFNPAALPLMPYLLAMSQSATVSSKNISKRKFIPPAITSIKTKTELHLGATLQLARELINVHRLNKDQATALIQIAQMMASQGSDEDALEPFGHSLPITVIHGVFGAGKSYLLAVVILFLVELFEKCDSGTVGNARPWKVLVSSSTNVAVDRVLLGLLSLGFEKFIRVGSVRKIAKPVLPYSLHAGSDNESEQLKELNALLKEELTPIERVYVRKSIEQHKLGTNRVLLKQVRVVGVTCAACAFPCLNDLKFPVVVLDECSQMTEPASLLPIARFQCEKLILVGDPKQLPPTIQGSDAAHENGLEQTLFDRLCLMGHKPVLLRTQYRCHPAISAIANDLFYEGSLVNGISERERSPVLEWLPTLCFYNVTGAEQVERENSFVNVAEATFTLKLIQSLMASGVESCMIGVITLYKSQMYKICNLLSAVDVGHPDVKAVQVSTVDAFQGAEKEITILSCVRTRQVGFIDSEKRMNVALTRGRRHLLIVGSLSCLRKNRLWGRVIQHCEGREDGLQHASQCEPQLDHLLKDYLEKQAEEKQKKKEKEKSKDKSH.

Disordered regions lie at residues 78 to 110 (SRAV…QPSG), 132 to 196 (ENSE…PLSL), and 300 to 349 (TQSI…PEAQ). The span at 81 to 90 (VEPDGSREAL) shows a compositional bias: basic and acidic residues. The span at 92–105 (SGSRTLVSSSRSLG) shows a compositional bias: low complexity. Polar residues-rich tracts occupy residues 173–185 (PVST…ITFS) and 300–321 (TQSI…TTSR). 2 positions are modified to phosphoserine: S331 and S445. Disordered stretches follow at residues 460–496 (PVSP…SKSN), 524–545 (TSDT…ERWE), and 610–664 (GDVK…GVSP). Basic and acidic residues predominate over residues 533–545 (EDSRLSQDSERWE). C1111, H1113, C1136, and C1144 together coordinate Zn(2+). Residues 1111-1153 (CHHNQPAKLVMVKKEGPNKGRLFYTCDKSKDNQCKFFKWLEEV) form a GRF-type zinc finger.

In terms of assembly, interacts with DNA repair protein RAD51; the interaction promotes RAD51 strand exchange activity. Also interacts with DNA repair proteins EXO1 and BRCA1; the interactions are increased following DNA damage induction.

It localises to the nucleus. The catalysed reaction is ATP + H2O = ADP + phosphate + H(+). It carries out the reaction Couples ATP hydrolysis with the unwinding of duplex DNA at the replication fork by translocating in the 5'-3' direction. This creates two antiparallel DNA single strands (ssDNA). The leading ssDNA polymer is the template for DNA polymerase III holoenzyme which synthesizes a continuous strand.. 5'-3' DNA helicase which is recruited to sites of DNA damage and promotes repair of replication-blocking DNA lesions through stimulation of homologous recombination (HR). Promotes HR by directly stimulating RAD51-mediated strand exchange activity. Not required to load RAD51 at sites of DNA damage but promotes recombinational repair after RAD51 recruitment. Also promotes HR by positively regulating EXO1-mediated DNA end resection of DNA double-strand breaks. Required for recruitment of replication protein RPA2 to DNA damage sites. Promotes the initiation of the G2/M checkpoint but not its maintenance. Catalyzes Holliday junction branch migration and dissociation of D-loops and DNA flaps. The protein is 5'-3' DNA helicase ZGRF1 (Zgrf1) of Mus musculus (Mouse).